Reading from the N-terminus, the 120-residue chain is Non-specific lipid-transfer protein (120 aa).

Residues M1–A26 form the signal peptide. 4 disulfide bridges follow: C30-C79, C40-C56, C57-C102, and C77-C116.

This sequence belongs to the plant LTP family. In terms of tissue distribution, expressed in protoderm cells of somatic and zygotic embryos, and transiently expressed in epidermal cell layers of leaves, flowers and seeds.

In terms of biological role, plant non-specific lipid-transfer proteins transfer phospholipids as well as galactolipids across membranes. May play a role in wax or cutin deposition in the cell walls of expanding epidermal cells and certain secretory tissues. This is Non-specific lipid-transfer protein (EP2) from Daucus carota (Wild carrot).